Reading from the N-terminus, the 160-residue chain is Major pollen allergen Bet v 1-G (160 aa).

Brassinolide-binding residues include K55, Y82, Y84, and N101.

Belongs to the BetVI family.

The protein localises to the cytoplasm. Its function is as follows. May be a general steroid carrier protein. In Betula pendula (European white birch), this protein is Major pollen allergen Bet v 1-G (BETV1G).